A 422-amino-acid polypeptide reads, in one-letter code: tRNA hydroxylation protein P (422 aa).

A signal peptide spans 1 to 58 (MNQVELLSPAGNLKKLKIALNYGADAVYGGVSHFSLRNRAGKEFTLETFKEGIDYAHA).

The protein belongs to the peptidase U32 family.

Its function is as follows. Involved in prephenate-dependent formation of 5-hydroxyuridine (ho5U) modification at position 34 in tRNAs, the first step in 5-carboxymethoxyuridine (cmo5U) biosynthesis. The chain is tRNA hydroxylation protein P from Helicobacter pylori (strain ATCC 700392 / 26695) (Campylobacter pylori).